The chain runs to 492 residues: MLSRWTRRVNESRLAQRKLTLLGRAIALVVGELLFNAVCWIAAGICFGKTDGILGLALLAWTIGLRHGLDADHISAIDNATRQLVSQGQLPITCGLFFSLGHSTIVIVVNVAIAVSVDIYDKLDRVGSIGGIVGAAVSASFLFLIACLNIYFLVGAIKQRRSMKRRQALGLPPDEDEGDPSKIYGGGCMVRVVGPILRAVDRPWKMYPVGVLFGFGFDTASSIALLAISAIAQRGPNGDAISHGKIVILPFLFTAGMSLVDSLDSILMLYAYATPDSTSPEGKLALLQYPDPNYKDSYLEETVATTLPAEDGQTERHVIEPIDIPQGETEGLETEDNIKAKTGNEILVEEERVGGPSRVDGSGGVGNERVMKAKANTMSSLSIILTLLSILVALSISLIEIMGLIGDNCTQCQDAANDPDGGGLAGSWWRAWARANDQSGYIGAAIVGCFAAILAGWYGAKWGKKKWKARRDANAAIVLEDNEDDAAETPVA.

Residues 1–24 (MLSRWTRRVNESRLAQRKLTLLGR) lie on the Cytoplasmic side of the membrane. Residues 25–45 (AIALVVGELLFNAVCWIAAGI) traverse the membrane as a helical segment. At 46 to 50 (CFGKT) the chain is on the extracellular side. A helical membrane pass occupies residues 51–71 (DGILGLALLAWTIGLRHGLDA). The Cytoplasmic portion of the chain corresponds to 72-94 (DHISAIDNATRQLVSQGQLPITC). Residues 95–115 (GLFFSLGHSTIVIVVNVAIAV) traverse the membrane as a helical segment. At 116-136 (SVDIYDKLDRVGSIGGIVGAA) the chain is on the extracellular side. Residues 137–157 (VSASFLFLIACLNIYFLVGAI) form a helical membrane-spanning segment. The Cytoplasmic segment spans residues 158-210 (KQRRSMKRRQALGLPPDEDEGDPSKIYGGGCMVRVVGPILRAVDRPWKMYPVG). A helical transmembrane segment spans residues 211–231 (VLFGFGFDTASSIALLAISAI). The Extracellular portion of the chain corresponds to 232 to 239 (AQRGPNGD). Residues 240–260 (AISHGKIVILPFLFTAGMSLV) traverse the membrane as a helical segment. Residues 261 to 382 (DSLDSILMLY…AKANTMSSLS (122 aa)) lie on the Cytoplasmic side of the membrane. A helical transmembrane segment spans residues 383–403 (IILTLLSILVALSISLIEIMG). Over 404-439 (LIGDNCTQCQDAANDPDGGGLAGSWWRAWARANDQS) the chain is Extracellular. N408 is a glycosylation site (N-linked (GlcNAc...) asparagine). The helical transmembrane segment at 440–460 (GYIGAAIVGCFAAILAGWYGA) threads the bilayer. Over 461-492 (KWGKKKWKARRDANAAIVLEDNEDDAAETPVA) the chain is Cytoplasmic.

It belongs to the NiCoT transporter (TC 2.A.52) family.

The protein resides in the cell membrane. Functionally, high-affinity nickel-specific transporter responsible for nickel uptake and required for high levels of activity of urease URE1. Does not transport cobalt. Plays a role in host brain invasion. This Cryptococcus neoformans var. grubii serotype A (strain H99 / ATCC 208821 / CBS 10515 / FGSC 9487) (Filobasidiella neoformans var. grubii) protein is High-affinity nickel transport protein.